The primary structure comprises 550 residues: Phosphatidylinositol 4-kinase gamma 2 (550 aa).

2 consecutive Ubiquitin-like domains span residues 34–111 and 112–190; these read SVLV…YDPL and LVTV…VEDT. The interval 228-247 is disordered; that stretch reads VDGLNKGSPPVRSAEGTGGT. A PI3K/PI4K catalytic domain is found at 234–532; sequence GSPPVRSAEG…SVLPASSEAT (299 aa). The G-loop stretch occupies residues 240 to 246; the sequence is SAEGTGG. Residues 241–247, K263, and 359–362 each bind ATP; these read AEGTGGT and QMFM. A catalytic loop region spans residues 392–400; it reads ANADRHAGN. The tract at residues 415–441 is activation loop; the sequence is PIDHGYCLPENFEDCTFEWLYWPQAKL. D417 is an ATP binding site.

This sequence belongs to the PI3/PI4-kinase family. Type II PI4K subfamily.

The protein resides in the membrane. The catalysed reaction is a 1,2-diacyl-sn-glycero-3-phospho-(1D-myo-inositol) + ATP = a 1,2-diacyl-sn-glycero-3-phospho-(1D-myo-inositol 4-phosphate) + ADP + H(+). The phosphorylation of phosphatidylinositol (PI) to PI4P is the first committed step in the generation of phosphatidylinositol 4,5-bisphosphate (PIP2), a precursor of the second messenger inositol 1,4,5-trisphosphate (InsP3). This is Phosphatidylinositol 4-kinase gamma 2 (PI4KG2) from Arabidopsis thaliana (Mouse-ear cress).